A 31-amino-acid polypeptide reads, in one-letter code: Photosystem II reaction center protein T (31 aa).

A helical membrane pass occupies residues Ala3–Phe23.

Belongs to the PsbT family. As to quaternary structure, PSII is composed of 1 copy each of membrane proteins PsbA, PsbB, PsbC, PsbD, PsbE, PsbF, PsbH, PsbI, PsbJ, PsbK, PsbL, PsbM, PsbT, PsbX, PsbY, Psb30/Ycf12, peripheral proteins PsbO, CyanoQ (PsbQ), PsbU, PsbV and a large number of cofactors. It forms dimeric complexes.

It localises to the cellular thylakoid membrane. Found at the monomer-monomer interface of the photosystem II (PS II) dimer, plays a role in assembly and dimerization of PSII. PSII is a light-driven water plastoquinone oxidoreductase, using light energy to abstract electrons from H(2)O, generating a proton gradient subsequently used for ATP formation. In Prochlorococcus marinus (strain NATL2A), this protein is Photosystem II reaction center protein T.